A 259-amino-acid chain; its full sequence is UPF0246 protein Rfer_2372 (259 aa).

Belongs to the UPF0246 family.

This is UPF0246 protein Rfer_2372 from Albidiferax ferrireducens (strain ATCC BAA-621 / DSM 15236 / T118) (Rhodoferax ferrireducens).